The following is a 1104-amino-acid chain: Isoleucine--tRNA ligase (1104 aa).

The 'HIGH' region signature appears at 48-58 (PYTTGRIHLGT). The 'KMSKS' region motif lies at 644-648 (KMSKS). K647 contacts ATP.

The protein belongs to the class-I aminoacyl-tRNA synthetase family. IleS type 2 subfamily. As to quaternary structure, monomer. Zn(2+) serves as cofactor.

The protein localises to the cytoplasm. It catalyses the reaction tRNA(Ile) + L-isoleucine + ATP = L-isoleucyl-tRNA(Ile) + AMP + diphosphate. In terms of biological role, catalyzes the attachment of isoleucine to tRNA(Ile). As IleRS can inadvertently accommodate and process structurally similar amino acids such as valine, to avoid such errors it has two additional distinct tRNA(Ile)-dependent editing activities. One activity is designated as 'pretransfer' editing and involves the hydrolysis of activated Val-AMP. The other activity is designated 'posttransfer' editing and involves deacylation of mischarged Val-tRNA(Ile). This chain is Isoleucine--tRNA ligase, found in Methanocella arvoryzae (strain DSM 22066 / NBRC 105507 / MRE50).